Consider the following 283-residue polypeptide: Octanoyl-[GcvH]:protein N-octanoyltransferase (283 aa).

The region spanning 42–248 (GQSDAVVRTW…TLQSFGGELY (207 aa)) is the BPL/LPL catalytic domain. The active-site Acyl-thioester intermediate is Cys147.

It belongs to the octanoyltransferase LipL family.

It catalyses the reaction N(6)-octanoyl-L-lysyl-[glycine-cleavage complex H protein] + L-lysyl-[lipoyl-carrier protein] = N(6)-octanoyl-L-lysyl-[lipoyl-carrier protein] + L-lysyl-[glycine-cleavage complex H protein]. The protein operates within protein modification; protein lipoylation via endogenous pathway; protein N(6)-(lipoyl)lysine from octanoyl-[acyl-carrier-protein]. Catalyzes the amidotransfer (transamidation) of the octanoyl moiety from octanoyl-GcvH to the lipoyl domain of the E2 subunit of lipoate-dependent enzymes. In Geobacillus kaustophilus (strain HTA426), this protein is Octanoyl-[GcvH]:protein N-octanoyltransferase.